The chain runs to 341 residues: N-(sulfonatooxy)alkenimidothioic acid sulfate-lyase (epithionitrile-forming) (341 aa).

Positions 1–24 (MAPTLQGQWIKVGQKGGTGPGPRS) are disordered. Kelch repeat units lie at residues 34 to 82 (KLYS…VRMV), 87 to 133 (KIYI…FHSM), 139 to 194 (HVYV…VVQG), and 203 to 249 (ATSI…AHAV). The a (Z)-N-(sulfonatooxy)alkanimidothioate site is built by K46, R94, T129, F130, R157, G186, K211, and V244. The active-site Proton donor is R94. The active-site Proton donor is the R157. Residues E260, D264, and H268 each contribute to the Fe(2+) site. W303 contacts a (Z)-N-(sulfonatooxy)alkanimidothioate.

In terms of assembly, homodimer. Interacts with WRKY53. Fe(2+) serves as cofactor. In terms of tissue distribution, expressed in epidermal cells of all above-ground organs except the anthers, in cambial cells of leaf and stem vascular bundles, and in glucosinolates rich S-cells found in stems just below the inflorescence. Absent from roots.

Its subcellular location is the cytoplasm. It localises to the nucleus. It carries out the reaction a (Z)-N-(sulfonatooxy)alkenimidothioate = an epithionitrile + sulfate. The catalysed reaction is a (Z)-N-(sulfonatooxy)alkanimidothioate = a nitrile + sulfur + sulfate. It catalyses the reaction (Z)-(indol-3-yl)-N-(sulfonatooxy)methanimidothioate = (indol-3-yl)acetonitrile + sulfur + sulfate. Not dependent on the presence of Fe(2+) although supplemental Fe(2+) increases nitriles formation. Its function is as follows. Specifier protein that contributes to constitutive and herbivore-induced simple nitrile formation. Converts glucosinolates both to epithionitriles and to simple nitriles in the presence of myrosinase. Promotes the formation of epithionitriles after hydrolysis of alkenylglucosinolates containing a terminal double bond. Mediates indol-3-ylacetonitrile (IACN) production from indol-3-ylmethylglucosinolate (glucobrassicin). Triggers the production of 3,4-epithiobutylnitrile from 2-propenylisothiocyanate, product of 2-propenylglucosinolate (sinigrin) catalysis by myrosinase. Seems inactive toward benzylglucosinolate (glucotropaeolin). Acts as a negative regulator of senescence. This Arabidopsis thaliana (Mouse-ear cress) protein is N-(sulfonatooxy)alkenimidothioic acid sulfate-lyase (epithionitrile-forming).